The chain runs to 253 residues: uncharacterized protein (253 aa).

Residues 200 to 209 (TGREHAHKGP) show a composition bias toward basic and acidic residues. Disordered stretches follow at residues 200 to 225 (TGRE…PNPA) and 234 to 253 (QHSP…SAAT).

As to expression, most abundantly expressed in gastrointestinal tissues. Expressed at lower levels in kidney and placenta. Expressed in fetal brain, liver, placenta, kidney and lung.

This is an uncharacterized protein from Homo sapiens (Human).